The following is a 238-amino-acid chain: Membrane protein 2 (238 aa).

The protein belongs to the varicellovirus ORF2 protein family. Post-translationally, phosphorylated by host.

The protein resides in the host membrane. The chain is Membrane protein 2 from Varicella-zoster virus (strain Dumas) (HHV-3).